A 303-amino-acid chain; its full sequence is Heme A synthase (303 aa).

Residues Met1 to Lys8 are Cytoplasmic-facing. Residues Trp9–Thr29 traverse the membrane as a helical segment. Residues Lys30–Ser67 lie on the Extracellular side of the membrane. Cys37 and Cys44 are joined by a disulfide. Residue Glu60 is part of the active site. Residue His63 participates in heme o binding. The helical transmembrane segment at Ala68 to Ile88 threads the bilayer. Topologically, residues Lys89–Pro93 are cytoplasmic. Residues Leu94–Ile114 traverse the membrane as a helical segment. Residues Trp115–His125 lie on the Extracellular side of the membrane. His125 is a binding site for heme o. The helical transmembrane segment at Phe126–Ile146 threads the bilayer. Residues Asp147–Arg163 lie on the Cytoplasmic side of the membrane. A helical membrane pass occupies residues Leu164 to His184. Over Ala185 to Arg215 the chain is Extracellular. A heme b-binding site is contributed by His214. Residues Ile216 to Tyr236 form a helical membrane-spanning segment. At Pro237 to Tyr244 the chain is on the cytoplasmic side. The helical transmembrane segment at Gly245 to Met265 threads the bilayer. The Extracellular segment spans residues Thr266–Leu270. A helical membrane pass occupies residues Ile271 to Ile291. His276 provides a ligand contact to heme b. The Cytoplasmic segment spans residues Met292 to Gln303.

It belongs to the COX15/CtaA family. Type 1 subfamily. As to quaternary structure, interacts with CtaB. The cofactor is heme b.

The protein resides in the cell membrane. The catalysed reaction is Fe(II)-heme o + 2 A + H2O = Fe(II)-heme a + 2 AH2. It functions in the pathway porphyrin-containing compound metabolism; heme A biosynthesis; heme A from heme O: step 1/1. In terms of biological role, catalyzes the conversion of heme O to heme A by two successive hydroxylations of the methyl group at C8. The first hydroxylation forms heme I, the second hydroxylation results in an unstable dihydroxymethyl group, which spontaneously dehydrates, resulting in the formyl group of heme A. The sequence is that of Heme A synthase from Staphylococcus aureus (strain bovine RF122 / ET3-1).